The following is a 187-amino-acid chain: Orotate phosphoribosyltransferase (187 aa).

Residues Arg103, Lys104, Lys107, and 129-137 (EDVTTSGGS) contribute to the 5-phospho-alpha-D-ribose 1-diphosphate site. Orotate-binding residues include Thr133 and Arg161.

The protein belongs to the purine/pyrimidine phosphoribosyltransferase family. PyrE subfamily. In terms of assembly, homodimer. Requires Mg(2+) as cofactor.

The enzyme catalyses orotidine 5'-phosphate + diphosphate = orotate + 5-phospho-alpha-D-ribose 1-diphosphate. It participates in pyrimidine metabolism; UMP biosynthesis via de novo pathway; UMP from orotate: step 1/2. Catalyzes the transfer of a ribosyl phosphate group from 5-phosphoribose 1-diphosphate to orotate, leading to the formation of orotidine monophosphate (OMP). This chain is Orotate phosphoribosyltransferase, found in Methanosarcina mazei (strain ATCC BAA-159 / DSM 3647 / Goe1 / Go1 / JCM 11833 / OCM 88) (Methanosarcina frisia).